The primary structure comprises 171 residues: Peptide deformylase (171 aa).

2 residues coordinate Fe cation: C94 and H136. The active site involves E137. A Fe cation-binding site is contributed by H140.

The protein belongs to the polypeptide deformylase family. Fe(2+) is required as a cofactor.

The enzyme catalyses N-terminal N-formyl-L-methionyl-[peptide] + H2O = N-terminal L-methionyl-[peptide] + formate. In terms of biological role, removes the formyl group from the N-terminal Met of newly synthesized proteins. Requires at least a dipeptide for an efficient rate of reaction. N-terminal L-methionine is a prerequisite for activity but the enzyme has broad specificity at other positions. In Afipia carboxidovorans (strain ATCC 49405 / DSM 1227 / KCTC 32145 / OM5) (Oligotropha carboxidovorans), this protein is Peptide deformylase.